A 285-amino-acid polypeptide reads, in one-letter code: Protease HtpX homolog (285 aa).

2 helical membrane passes run 7 to 27 (TAML…MIGG) and 30 to 50 (GMTI…WFSD). Histidine 131 contacts Zn(2+). Glutamate 132 is a catalytic residue. Histidine 135 lines the Zn(2+) pocket. 2 helical membrane-spanning segments follow: residues 141–161 (ILIS…ANFA) and 177–197 (IAGI…QMAI). Position 202 (glutamate 202) interacts with Zn(2+).

It belongs to the peptidase M48B family. The cofactor is Zn(2+).

It localises to the cell inner membrane. In Paraburkholderia phytofirmans (strain DSM 17436 / LMG 22146 / PsJN) (Burkholderia phytofirmans), this protein is Protease HtpX homolog.